Reading from the N-terminus, the 215-residue chain is Putative zinc finger protein ORF121 (215 aa).

The RING-type; degenerate zinc-finger motif lies at 53-105 (CVICMEPTYTKKTLAECDIEGGALRVTTMPCPTHYICDNCIRQEMEDKCPICR).

The sequence is that of Putative zinc finger protein ORF121 from Magallana gigas (Pacific oyster).